We begin with the raw amino-acid sequence, 100 residues long: MIPLQHGLILSAILFVLGLTGLVIRRNLLFMLIGLEIMINASALAFVVAGSYWGQTDGQVMYILAISLAAAEASIGLALLLQLHRRRQNLNIDSVSEMRG.

A run of 3 helical transmembrane segments spans residues 4-24 (LQHGLILSAILFVLGLTGLVI), 28-48 (LLFMLIGLEIMINASALAFVV), and 60-80 (VMYILAISLAAAEASIGLALL).

The protein belongs to the complex I subunit 4L family. In terms of assembly, NDH-1 is composed of 13 different subunits. Subunits NuoA, H, J, K, L, M, N constitute the membrane sector of the complex.

The protein resides in the cell inner membrane. It carries out the reaction a quinone + NADH + 5 H(+)(in) = a quinol + NAD(+) + 4 H(+)(out). In terms of biological role, NDH-1 shuttles electrons from NADH, via FMN and iron-sulfur (Fe-S) centers, to quinones in the respiratory chain. The immediate electron acceptor for the enzyme in this species is believed to be ubiquinone. Couples the redox reaction to proton translocation (for every two electrons transferred, four hydrogen ions are translocated across the cytoplasmic membrane), and thus conserves the redox energy in a proton gradient. The chain is NADH-quinone oxidoreductase subunit K from Shigella boydii serotype 18 (strain CDC 3083-94 / BS512).